Reading from the N-terminus, the 109-residue chain is Globin (109 aa).

In terms of domain architecture, Globin spans 3–109 (PLTAAEVSSL…IFPIAGIHAL (107 aa)).

Belongs to the globin family. In terms of assembly, monomer.

Functionally, oxygen binding protein. The polypeptide is Globin (Dicrocoelium dendriticum (Small liver fluke)).